A 265-amino-acid polypeptide reads, in one-letter code: Cell division protein DivIB (265 aa).

The Cytoplasmic portion of the chain corresponds to 1-30 (MKNSKVIKLQDRVPKLKNQQKKKKKNVNHR). Residues 31–51 (LILYISILFLLVLFLIYFRSP) form a helical membrane-spanning segment. Over 52–265 (LSNIKKISVF…NRMIVFNTLS (214 aa)) the chain is Extracellular. In terms of domain architecture, POTRA spans 53 to 121 (SNIKKISVFG…NKIDVHIEEY (69 aa)).

The protein belongs to the FtsQ/DivIB family. DivIB subfamily.

The protein resides in the cell membrane. Cell division protein that may be involved in stabilizing or promoting the assembly of the division complex. The chain is Cell division protein DivIB from Bacillus anthracis.